Here is a 1309-residue protein sequence, read N- to C-terminus: Lysine-specific demethylase 2B (1309 aa).

S26 carries the phosphoserine modification. The JmjC domain occupies 147–315 (FSHTKLEHLV…MQLRIYEIED (169 aa)). Substrate is bound at residue T208. Residues H211 and D213 each coordinate Fe cation. K228 serves as a coordination point for substrate. A Fe cation-binding site is contributed by H283. Acidic residues predominate over residues 378-403 (DMEEESCEQQPQEEEEEEEDKEEEGD). A disordered region spans residues 378-476 (DMEEESCEQQ…PTGSPATEVS (99 aa)). Basic and acidic residues predominate over residues 404 to 413 (GADKTPKPPT). Positions 415–424 (DPTSPTSTPP) are enriched in low complexity. Phosphoserine occurs at positions 447 and 450. The residue at position 466 (T466) is a Phosphothreonine. Residues 467-476 (PTGSPATEVS) are compositionally biased toward polar residues. S470 bears the Phosphoserine mark. A CXXC-type zinc finger spans residues 579–625 (ARRRRTRCRKCEACLRTECGECHFCKDMKKFGGPGRMKQSCIMRQCI). 16 residues coordinate Zn(2+): C586, C589, C592, C597, C600, C603, C619, C624, C635, C638, C661, C664, H669, C672, C692, and C695. The PHD-type zinc finger occupies 632–698 (TAVCLVCGEA…CWECPKCNHA (67 aa)). Disordered stretches follow at residues 700–816 (KTGK…SLSP) and 828–1005 (QLKP…SASP). Positions 722–772 (KEQKMNRDNKEGQEPAKRRSECEEAPRRRSDEHPKKVPADGILRRKSDDVH) are enriched in basic and acidic residues. Residues 792-816 (SSLQTSPGSSSHLSPRPPLGSSLSP) show a composition bias toward low complexity. Glycyl lysine isopeptide (Lys-Gly) (interchain with G-Cter in SUMO2) cross-links involve residues K830 and K863. Over residues 883–892 (SRSSSPTAGP) the composition is skewed to polar residues. Positions 905 to 914 (KVKMRRKRRL) are enriched in basic residues. Residues 915 to 933 (VNKELSKELSKELNHEIQK) are compositionally biased toward basic and acidic residues. Residues 916–944 (NKELSKELSKELNHEIQKTESTLAHESQQ) adopt a coiled-coil conformation. Residue S924 is modified to Phosphoserine. Over residues 934 to 946 (TESTLAHESQQPI) the composition is skewed to polar residues. A phosphoserine mark is found at S948 and S952. Residues 955-968 (DEPKRPLSHCERPH) are compositionally biased toward basic and acidic residues. Phosphoserine is present on residues S991 and S1004. The 47-residue stretch at 1032–1078 (DGAAHVMHREVWMAVFSYLSHRDLCVCMRVCRTWNRWCCDKRLWTRI) folds into the F-box domain. LRR repeat units follow at residues 1106 to 1127 (WTNISKKQLSWLINRLPGLRDL), 1129 to 1155 (LSGCSWIAVSALCSSSCPLLRTLDVQW), 1195 to 1220 (GLDITDVSLRLIIRHMPLLSKLQLSY), 1221 to 1250 (CNHINDQSINLLTAVGTTTRDSLTEVNLSD), 1251 to 1275 (CNKVTDLCLSFFKRCGNICHIDLRY), and 1276 to 1309 (CKQVTKEGCEQFIAEMSVSVQFGQVEEKLLQKLS).

This sequence belongs to the JHDM1 histone demethylase family. As to quaternary structure, interacts with SKP1, forming heterodimers. The KDM2B-SKP1 heterodimeric complex interacts with the PCGF1-BCORL heterodimeric complex to form a homotetrameric polycomb repression complex 1 (PRC1.1). Directly interacts with CUL1. The SKP1-KDM2B interacts with UBB. Fe(2+) is required as a cofactor.

The protein resides in the nucleus. The protein localises to the nucleolus. It localises to the chromosome. The catalysed reaction is N(6),N(6)-dimethyl-L-lysyl(36)-[histone H3] + 2 2-oxoglutarate + 2 O2 = L-lysyl(36)-[histone H3] + 2 formaldehyde + 2 succinate + 2 CO2. With respect to regulation, histone demethylase activity is inhibited by fumarate. In terms of biological role, histone demethylase that demethylates 'Lys-4' and 'Lys-36' of histone H3, thereby playing a central role in histone code. Preferentially demethylates trimethylated H3 'Lys-4' and dimethylated H3 'Lys-36' residue while it has weak or no activity for mono- and tri-methylated H3 'Lys-36'. Preferentially binds the transcribed region of ribosomal RNA and represses the transcription of ribosomal RNA genes which inhibits cell growth and proliferation. May also serve as a substrate-recognition component of the SCF (SKP1-CUL1-F-box protein)-type E3 ubiquitin ligase complex. The protein is Lysine-specific demethylase 2B (Kdm2b) of Mus musculus (Mouse).